Consider the following 820-residue polypeptide: Disintegrin and metalloproteinase domain-containing protein 29 (820 aa).

The N-terminal stretch at 1-18 (MKMLLLLHCLGVFLSCSG) is a signal peptide. The propeptide occupies 19–193 (HIQDEHPQYH…TQKQSSYVGW (175 aa)). Residues 194–674 (WIHFRIVEIV…GPPPKRKKKK (481 aa)) are Extracellular-facing. The Peptidase M12B domain occupies 198–390 (RIVEIVVVID…RTKCLLETVH (193 aa)). Residues N217 and N320 are each glycosylated (N-linked (GlcNAc...) asparagine). Intrachain disulfides connect C307–C384, C347–C369, and C349–C354. N-linked (GlcNAc...) asparagine glycosylation is found at N368, N428, N469, N538, N545, N558, and N564. One can recognise a Disintegrin domain in the interval 397–483 (VKRCGNGVVE…KCPDDFYVED (87 aa)). A disulfide bridge connects residues C455 and C475. Intrachain disulfides connect C625–C636, C630–C642, and C644–C653. Residues 625 to 654 (CSPAFCNKRGICNNKHHCHCNYLWDPPNCL) form the EGF-like domain. The helical transmembrane segment at 675-695 (KFCYLCILLLIVLFILLCCLY) threads the bilayer. Topologically, residues 696 to 820 (RLCKKSKPIK…SQSQPPVTPS (125 aa)) are cytoplasmic. A disordered region spans residues 706-820 (KQQDVQTPSA…SQSQPPVTPS (115 aa)). A compositionally biased stretch (basic and acidic residues) spans 715–727 (AKEEEKIQRRPHE). The segment covering 738-820 (PSQSQPPVTP…SQSQPPVTPS (83 aa)) has biased composition (low complexity). Tandem repeats lie at residues 739 to 747 (SQSQPPVTP), 748 to 756 (SQSHPQVMP), 757 to 765 (SQSQPPVTP), 766 to 774 (SQSQPRVMP), 775 to 783 (SQSQPPVMP), 784 to 792 (SQSHPQLTP), 793 to 801 (SQSQPPVTP), 802 to 810 (SQRQPQLMP), and 811 to 819 (SQSQPPVTP). The segment at 739–819 (SQSQPPVTPS…PSQSQPPVTP (81 aa)) is 9 X 9 AA approximate repeats.

As to expression, expressed specifically in testes.

It localises to the membrane. May be involved in spermatogenesis and fertilization. Seems to be a non catalytic metalloprotease-like protein. The chain is Disintegrin and metalloproteinase domain-containing protein 29 (ADAM29) from Homo sapiens (Human).